A 1069-amino-acid polypeptide reads, in one-letter code: DNA annealing helicase and endonuclease ZRANB3 (1069 aa).

The 163-residue stretch at 46–208 (VFALRRDGRC…FMQIEALFPQ (163 aa)) folds into the Helicase ATP-binding domain. Residues 46 to 481 (VFALRRDGRC…GRKEKLQATE (436 aa)) are DNA annealing helicase activity. Residue 59–66 (DEMGLGKT) participates in ATP binding. The DEAH box motif lies at 157-160 (DESH). The Helicase C-terminal domain maps to 325–485 (AVKDYIKMLL…KLQATEDDKE (161 aa)). The PIP-box motif lies at 518 to 525 (QHDIRSFF). Residues 617 to 646 (PEKGWQCGFCTFLNNPGLPYCEMCENPRSR) form a RanBP2-type zinc finger. The disordered stretch occupies residues 648–720 (AGRNHLQDNN…PEIGQLNNSG (73 aa)). 2 stretches are compositionally biased toward basic and acidic residues: residues 652–661 (HLQDNNKNDE) and 677–707 (ECERQCPERLEAEQSANSKEEALEGGGEDRL). The HNH domain maps to 1001–1041 (PGEGHFWQVDHIRPVYEGGGQCSLDNLQTLCTVCHKERTAQ). Residues 1001–1069 (PGEGHFWQVD…SDITRFLVKK (69 aa)) are endonuclease activity. Positions 1064-1068 (RFLVK) match the APIM motif motif.

This sequence belongs to the SNF2/RAD54 helicase family. As to quaternary structure, interacts (via PIP-box and RanBP2-type zinc finger) with PCNA (when PCNA is polyubiquitinated via 'Lys-63'-linked polyubiquitin).

It is found in the nucleus. The protein localises to the chromosome. In terms of biological role, DNA annealing helicase and endonuclease required to maintain genome stability at stalled or collapsed replication forks by facilitating fork restart and limiting inappropriate recombination that could occur during template switching events. Recruited to the sites of stalled DNA replication by polyubiquitinated PCNA and acts as a structure-specific endonuclease that cleaves the replication fork D-loop intermediate, generating an accessible 3'-OH group in the template of the leading strand, which is amenable to extension by DNA polymerase. In addition to endonuclease activity, also catalyzes the fork regression via annealing helicase activity in order to prevent disintegration of the replication fork and the formation of double-strand breaks. The chain is DNA annealing helicase and endonuclease ZRANB3 (Zranb3) from Mus musculus (Mouse).